Reading from the N-terminus, the 83-residue chain is U5-theraphotoxin-Hs1c (83 aa).

The N-terminal stretch at 1–21 (MKTSMFLTLTGLVLLFVVCYA) is a signal peptide. A propeptide spanning residues 22 to 49 (SESEEKEFPKELLSSIFAADSDFKVEER) is cleaved from the precursor. Intrachain disulfides connect C51–C63, C56–C68, and C62–C75.

It belongs to the neurotoxin 10 (Hwtx-1) family. 51 (Hntx-8) subfamily. Hntx-8 sub-subfamily. As to expression, expressed by the venom gland.

It is found in the secreted. Agglutinates erythrocytes. This is U5-theraphotoxin-Hs1c from Cyriopagopus schmidti (Chinese bird spider).